Consider the following 135-residue polypeptide: ATP synthase epsilon chain (135 aa).

This sequence belongs to the ATPase epsilon chain family. In terms of assembly, F-type ATPases have 2 components, CF(1) - the catalytic core - and CF(0) - the membrane proton channel. CF(1) has five subunits: alpha(3), beta(3), gamma(1), delta(1), epsilon(1). CF(0) has three main subunits: a, b and c.

Its subcellular location is the cell inner membrane. Its function is as follows. Produces ATP from ADP in the presence of a proton gradient across the membrane. The polypeptide is ATP synthase epsilon chain (Bradyrhizobium sp. (strain BTAi1 / ATCC BAA-1182)).